The primary structure comprises 295 residues: MNESESEIQARLLAQALPFMQRYENKTIVVKYGGHAMGNPELGKAFASDIALLKQSGVNPIVVHGGGPQIGAMLNKMGIESKFEGGLRVTDQKTVEIVEMVLAGSINKEIVALINQTGEWAIGLCGKDGNMVFAEKARKTIKDPDSNIERVLDLGFVGEVVEVDRTLLDLLARSEMIPVIAPVAPGRDGATYNINADTFAGAIAGALNATRLLFLTDVPGVLDKNGQLIKELSVAEAHALIADGTISGGMIPKVETCIDAIKAGVQGVVILNGKTAHSVLLEIFTEHGIGTLIVP.

Substrate-binding positions include 66–67 (GG), R88, and N193.

It belongs to the acetylglutamate kinase family. ArgB subfamily.

It is found in the cytoplasm. It catalyses the reaction N-acetyl-L-glutamate + ATP = N-acetyl-L-glutamyl 5-phosphate + ADP. It participates in amino-acid biosynthesis; L-arginine biosynthesis; N(2)-acetyl-L-ornithine from L-glutamate: step 2/4. In terms of biological role, catalyzes the ATP-dependent phosphorylation of N-acetyl-L-glutamate. The sequence is that of Acetylglutamate kinase from Rhizobium etli (strain CIAT 652).